We begin with the raw amino-acid sequence, 237 residues long: Exosome complex component Rrp4 (237 aa).

One can recognise an S1 motif domain in the interval 72 to 144 (GHIVVGKVVD…LSKDPVLTIK (73 aa)). A KH domain is found at 152–211 (PRGTLVEIPPQKVPRVIGRRGSMVSMIEDLLGVKLIVGQNGRIVVVGDDPQRVEIAVLAV).

It belongs to the RRP4 family. Component of the archaeal exosome complex. Forms a trimer of Rrp4 and/or Csl4 subunits. The trimer associates with a hexameric ring-like arrangement composed of 3 Rrp41-Rrp42 heterodimers.

It localises to the cytoplasm. Functionally, non-catalytic component of the exosome, which is a complex involved in RNA degradation. Increases the RNA binding and the efficiency of RNA degradation. Confers strong poly(A) specificity to the exosome. The sequence is that of Exosome complex component Rrp4 from Thermofilum pendens (strain DSM 2475 / Hrk 5).